The following is a 327-amino-acid chain: MFNDIPVFDYEDIQLIPNKCIITSRSQADTSVTLGKYQFKLPVIPANMQTIIDETIAEQLAKEGYFYIMHRFDEDSRKPFIKRMHEQGLIASISVGVKAYEYEFVTSLKEDTPEFITIDIAHGHANSVIDMIKHIKTELPETFVIAGNVGTPEAVRELENAGADATKVGIGPGKVCITKVKTGFGTGGWQLAALRWCAKAARKPIIADGGIRTHGDIAKSIRFGASMVMIGSLFAGHIESPGKTVEVNGETFKEYYGSASAYQKGEHKNVEGKKILLPTKGHLSDTLTEMQQDLQSSISYAGGKDLDSLRHVDYVIVKNSIWNGDSI.

The Thioimidate intermediate role is filled by Cys-176. 205–228 (IIADGGIRTHGDIAKSIRFGASMV) is a binding site for NADP(+).

The protein belongs to the IMPDH/GMPR family. GuaC type 2 subfamily.

It carries out the reaction IMP + NH4(+) + NADP(+) = GMP + NADPH + 2 H(+). Its function is as follows. Catalyzes the irreversible NADPH-dependent deamination of GMP to IMP. It functions in the conversion of nucleobase, nucleoside and nucleotide derivatives of G to A nucleotides, and in maintaining the intracellular balance of A and G nucleotides. The polypeptide is GMP reductase (Streptococcus pyogenes serotype M6 (strain ATCC BAA-946 / MGAS10394)).